Reading from the N-terminus, the 264-residue chain is 3-methyl-2-oxobutanoate hydroxymethyltransferase (264 aa).

2 residues coordinate Mg(2+): Asp44 and Asp83. 3-methyl-2-oxobutanoate contacts are provided by residues 44-45 (DS), Asp83, and Lys112. Residue Glu114 participates in Mg(2+) binding. Glu181 functions as the Proton acceptor in the catalytic mechanism.

The protein belongs to the PanB family. As to quaternary structure, homodecamer; pentamer of dimers. The cofactor is Mg(2+).

Its subcellular location is the cytoplasm. It catalyses the reaction 3-methyl-2-oxobutanoate + (6R)-5,10-methylene-5,6,7,8-tetrahydrofolate + H2O = 2-dehydropantoate + (6S)-5,6,7,8-tetrahydrofolate. The protein operates within cofactor biosynthesis; coenzyme A biosynthesis. Functionally, catalyzes the reversible reaction in which hydroxymethyl group from 5,10-methylenetetrahydrofolate is transferred onto alpha-ketoisovalerate to form ketopantoate. In Pyrobaculum arsenaticum (strain DSM 13514 / JCM 11321 / PZ6), this protein is 3-methyl-2-oxobutanoate hydroxymethyltransferase.